The chain runs to 567 residues: Glucose-6-phosphate isomerase, cytosolic A (567 aa).

Residues 156 to 157 (GS), 212 to 217 (SKTFTT), Q356, E360, H391, and K516 contribute to the D-glucose 6-phosphate site. Catalysis depends on E360, which acts as the Proton donor. Active-site residues include H391 and K516.

The protein belongs to the GPI family. As to quaternary structure, homodimer.

The protein localises to the cytoplasm. The catalysed reaction is alpha-D-glucose 6-phosphate = beta-D-fructose 6-phosphate. The protein operates within carbohydrate degradation; glycolysis; D-glyceraldehyde 3-phosphate and glycerone phosphate from D-glucose: step 2/4. Catalyzes the conversion of glucose-6-phosphate to fructose-6-phosphate, the second step in glycolysis, and the reverse reaction during gluconeogenesis. The sequence is that of Glucose-6-phosphate isomerase, cytosolic A from Oryza sativa subsp. japonica (Rice).